A 363-amino-acid polypeptide reads, in one-letter code: Chorismate synthase (363 aa).

NADP(+) is bound by residues Arg48 and Arg54. FMN contacts are provided by residues 125 to 127, 238 to 239, Gly278, 293 to 297, and Arg319; these read RSS, NA, and KPTSS.

This sequence belongs to the chorismate synthase family. Homotetramer. It depends on FMNH2 as a cofactor.

It catalyses the reaction 5-O-(1-carboxyvinyl)-3-phosphoshikimate = chorismate + phosphate. The protein operates within metabolic intermediate biosynthesis; chorismate biosynthesis; chorismate from D-erythrose 4-phosphate and phosphoenolpyruvate: step 7/7. Functionally, catalyzes the anti-1,4-elimination of the C-3 phosphate and the C-6 proR hydrogen from 5-enolpyruvylshikimate-3-phosphate (EPSP) to yield chorismate, which is the branch point compound that serves as the starting substrate for the three terminal pathways of aromatic amino acid biosynthesis. This reaction introduces a second double bond into the aromatic ring system. This chain is Chorismate synthase, found in Acidithiobacillus ferrooxidans (strain ATCC 23270 / DSM 14882 / CIP 104768 / NCIMB 8455) (Ferrobacillus ferrooxidans (strain ATCC 23270)).